The chain runs to 495 residues: Serine/threonine-protein kinase STN8, chloroplastic (495 aa).

A chloroplast-targeting transit peptide spans 1 to 49 (MASLLSPATPTATSAAFHSCSTAGFSTPTHISSQNSSLSLLSRRGCMMR). The Protein kinase domain maps to 133–477 (FLVTEKLGEG…AAAALRHPYF (345 aa)). ATP is bound by residues 139 to 147 (LGEGSFGVV) and Lys-186. The Proton acceptor role is filled by Asp-308.

The protein belongs to the protein kinase superfamily. Ser/Thr protein kinase family.

The protein resides in the plastid. It localises to the chloroplast thylakoid. It catalyses the reaction L-seryl-[protein] + ATP = O-phospho-L-seryl-[protein] + ADP + H(+). It carries out the reaction L-threonyl-[protein] + ATP = O-phospho-L-threonyl-[protein] + ADP + H(+). In terms of biological role, light-dependent serine/threonine protein kinase that specifically phosphorylates N-terminal threonine residues in psbA/D1, psbD/D2, psbC/CP43 and psbH, which are components of the core antenna complex of photosystem II. Phosphorylation of PSII core components facilitates the exchange of chlorophyll proteins between the grana and the stroma lamellae. Also involved in the phosphorylation of the calcium-sensing receptor (CaS). The chain is Serine/threonine-protein kinase STN8, chloroplastic (STN8) from Arabidopsis thaliana (Mouse-ear cress).